A 301-amino-acid polypeptide reads, in one-letter code: Formylmethanofuran--tetrahydromethanopterin formyltransferase (301 aa).

Belongs to the FTR family. Homotetramer.

Its subcellular location is the cytoplasm. It carries out the reaction N-formylmethanofuran + 5,6,7,8-tetrahydromethanopterin + H(+) = N(5)-formyl-5,6,7,8-tetrahydromethanopterin + methanofuran. It functions in the pathway one-carbon metabolism; methanogenesis from CO(2); 5,10-methenyl-5,6,7,8-tetrahydromethanopterin from CO(2): step 2/3. In terms of biological role, catalyzes the reversible transfer of a formyl group from formylmethanofuran (formyl-MFR) to tetrahydromethanopterin (H(4)MPT) to produce 5-formyl tetrahydromethanopterin (5-formyl-H(4)MPT) and methanofuran (MFR). This is Formylmethanofuran--tetrahydromethanopterin formyltransferase from Methanocaldococcus jannaschii (strain ATCC 43067 / DSM 2661 / JAL-1 / JCM 10045 / NBRC 100440) (Methanococcus jannaschii).